Reading from the N-terminus, the 888-residue chain is CRISPR-associated endonuclease/helicase Cas3 (888 aa).

The region spanning 20–231 (KGNDIHLLIY…AGFCSLADWL (212 aa)) is the HD Cas3-type domain. Asp75 and His160 together coordinate Mg(2+). Residues 301 to 504 (DALPVAPGLT…LDTYGLHTDP (204 aa)) enclose the Helicase ATP-binding domain. 314–321 (APTGSGKT) lines the ATP pocket. A DEAH box motif is present at residues 452–455 (DEVH). Residues 556–735 (MLERMIAAAN…AYRQWLDSIY (180 aa)) enclose the Helicase C-terminal domain.

It in the N-terminal section; belongs to the CRISPR-associated nuclease Cas3-HD family. In the central section; belongs to the CRISPR-associated helicase Cas3 family. In terms of assembly, interacts with the CasA subunit of Cascade once Cascade has recognized target DNA. Mg(2+) is required as a cofactor.

In terms of biological role, CRISPR (clustered regularly interspaced short palindromic repeat), is an adaptive immune system that provides protection against mobile genetic elements (viruses, transposable elements and conjugative plasmids). CRISPR clusters contain sequences complementary to antecedent mobile elements and target invading nucleic acids. CRISPR clusters are transcribed and processed into CRISPR RNA (crRNA). Cas3 plus Cascade participate in CRISPR interference, the third stage of CRISPR immunity. Its function is as follows. Acts as an endonuclease, a 3'-5'exonuclease, and an ATP-dependent dsDNA helicase. Anneals and unwinds R-loops (in which crRNA binds the target DNA, displacing the noncomplementary strand). Unwinding requires ATP, annealing does not. Required along with the Cascade complex for resistance to bacteriophage lambda infection as well as the ability to cure CRISPR-encoding high-copy number plasmid. A Cas3-CasA fusion protein purified with the Cascade complex nicks target plasmid in the presence but not absence of Mg(2+), and degrades plasmid fully in the presence of Mg(2+) and ATP, suggesting the helicase activity is required for complete degradation. In Escherichia coli (strain K12), this protein is CRISPR-associated endonuclease/helicase Cas3 (ygcB).